Here is a 202-residue protein sequence, read N- to C-terminus: Osteoclast-stimulating factor 1 (202 aa).

Residues 12–71 (GQVKVFRALYTFEPRTPDELYFEEGDIIYISDMSDTNWWKGTCKGRTGLIPSNYVAEQAE) enclose the SH3 domain. ANK repeat units follow at residues 72–101 (SIDN…GVNG), 105–135 (AGNT…ELNQ), and 139–168 (LGDT…RTDL).

It localises to the cytoplasm. Functionally, induces bone resorption, acting probably through a signaling cascade which results in the secretion of factor(s) enhancing osteoclast formation and activity. This chain is Osteoclast-stimulating factor 1 (OSTF1), found in Gallus gallus (Chicken).